The chain runs to 168 residues: MRFAFTTVSLSLLLSSLVASDAASSDVQFLTALVGDYQDHKTDYIKFFATAKDVPGDLSTLATKVLTYTDDSYTTLLNDDSLNVSNLEAYATSLPWYSRIQADAGGKGSASGSASGSGSAKSTASAEKSSGSSASASSTAGGSSSKGGVSELVAPVGAVVGALAVALM.

The signal sequence occupies residues 1–24 (MRFAFTTVSLSLLLSSLVASDAAS). Asn83 is a glycosylation site (N-linked (GlcNAc...) asparagine). Residues 111–149 (SGSASGSGSAKSTASAEKSSGSSASASSTAGGSSSKGGV) form a disordered region. The GPI-anchor amidated serine moiety is linked to residue Ser143. The propeptide at 144-168 (SSKGGVSELVAPVGAVVGALAVALM) is removed in mature form.

It belongs to the SRP1/TIP1 family. In terms of processing, the GPI-anchor is attached to the protein in the endoplasmic reticulum and serves to target the protein to the cell surface. There, the glucosamine-inositol phospholipid moiety is cleaved off and the GPI-modified mannoprotein is covalently attached via its lipidless GPI glycan remnant to the 1,6-beta-glucan of the outer cell wall layer.

The protein localises to the secreted. It localises to the cell wall. Its subcellular location is the membrane. In terms of biological role, probable cell wall protein which may have esterase activity, with a preference for esters of fatty acids from 4 to 16 carbon atoms. This Candida albicans (strain SC5314 / ATCC MYA-2876) (Yeast) protein is Repressed By RIM101 protein 2 (RBR2).